Consider the following 367-residue polypeptide: Pyrimidine monooxygenase RutA (367 aa).

FMN-binding positions include 49–50, N115, E124, 140–141, and S190; these read IK and RY.

This sequence belongs to the NtaA/SnaA/DszA monooxygenase family. RutA subfamily.

The catalysed reaction is uracil + FMNH2 + NADH + O2 = (Z)-3-ureidoacrylate + FMN + NAD(+) + H2O + H(+). It carries out the reaction thymine + FMNH2 + NADH + O2 = (Z)-2-methylureidoacrylate + FMN + NAD(+) + H2O + H(+). Its function is as follows. Catalyzes the pyrimidine ring opening between N-3 and C-4 by an unusual flavin hydroperoxide-catalyzed mechanism, adding oxygen atoms in the process to yield ureidoacrylate peracid, that immediately reacts with FMN forming ureidoacrylate and FMN-N(5)-oxide. The FMN-N(5)-oxide reacts spontaneously with NADH to produce FMN. Requires the flavin reductase RutF to regenerate FMN in vivo. The sequence is that of Pyrimidine monooxygenase RutA from Yersinia enterocolitica serotype O:8 / biotype 1B (strain NCTC 13174 / 8081).